The chain runs to 123 residues: Translation initiation factor 1A (123 aa).

Positions 1 to 11 are enriched in acidic residues; it reads MSPDKTEDEDK. Positions 1 to 26 are disordered; sequence MSPDKTEDEDKDVNVDQDQFNEEEES. The S1-like domain maps to 28–102; the sequence is GRVILPNKKK…EKADVVYRYT (75 aa).

Belongs to the eIF-1A family.

Functionally, seems to be required for maximal rate of protein biosynthesis. Enhances ribosome dissociation into subunits and stabilizes the binding of the initiator Met-tRNA(I) to 40 S ribosomal subunits. This chain is Translation initiation factor 1A (eIF1A), found in Thermoplasma volcanium (strain ATCC 51530 / DSM 4299 / JCM 9571 / NBRC 15438 / GSS1).